Consider the following 384-residue polypeptide: Helix-loop-helix protein delilah (384 aa).

Disordered stretches follow at residues 1 to 101 and 187 to 227; these read MKSN…TANA and EEAE…KIVP. A compositionally biased stretch (basic residues) spans 75-86; the sequence is KSRKNAPTKSKT. In terms of domain architecture, bHLH spans 94–153; it reads YRRKTANARERTRMREINTAFETLRHCVPEAIKGEDAANTNEKLTKITTLRLAMKYITML. A compositionally biased stretch (low complexity) spans 209–224; sequence KKSSAASKRQSQKQAK.

In terms of assembly, efficient DNA binding requires dimerization with another bHLH protein, possibly with da. Expressed almost exclusively in the attachments sites of the somatic muscles to tendon cells in the epidermis.

Its subcellular location is the nucleus. In terms of biological role, probably plays an important role in the differentiation of epidermal cells into the tendon cells that form the attachment sites for all muscles. This chain is Helix-loop-helix protein delilah (tx), found in Drosophila melanogaster (Fruit fly).